The primary structure comprises 71 residues: SPbeta prophage-derived uncharacterized protein YorP (71 aa).

This Bacillus subtilis (strain 168) protein is SPbeta prophage-derived uncharacterized protein YorP (yorP).